A 77-amino-acid polypeptide reads, in one-letter code: Ubiquitin-like protein NEDD8 (77 aa).

The segment at 70–72 (VLA) is interaction with uba-3. Residue Gly-76 forms a Glycyl lysine isopeptide (Gly-Lys) (interchain with K-? in acceptor proteins) linkage. Residue Phe-77 is a propeptide.

This sequence belongs to the ubiquitin family. In terms of assembly, interacts with dcn-1. Covalently attached to cullins. May interact with atx-3. In terms of processing, cleavage of precursor form is necessary for function.

It localises to the nucleus. The protein localises to the cytoplasm. Its function is as follows. Ubiquitin-like protein which plays an important role in cell cycle control and embryogenesis. Covalent attachment to its substrates requires prior activation by the E1 complex uba-3-ula-1 and linkage to the E2 enzyme ubc-12. Attachment of ned-8 to cullins activates their associated E3 ubiquitin ligase activity, and thus promotes polyubiquitination and proteasomal degradation of cyclins and other regulatory proteins. The chain is Ubiquitin-like protein NEDD8 (ned-8) from Caenorhabditis elegans.